The sequence spans 100 residues: Urease subunit gamma (100 aa).

This sequence belongs to the urease gamma subunit family. In terms of assembly, heterotrimer of UreA (gamma), UreB (beta) and UreC (alpha) subunits. Three heterotrimers associate to form the active enzyme.

The protein localises to the cytoplasm. It carries out the reaction urea + 2 H2O + H(+) = hydrogencarbonate + 2 NH4(+). It participates in nitrogen metabolism; urea degradation; CO(2) and NH(3) from urea (urease route): step 1/1. This chain is Urease subunit gamma, found in Variovorax paradoxus (strain S110).